A 555-amino-acid polypeptide reads, in one-letter code: Formate--tetrahydrofolate ligase (555 aa).

65–72 (TPAGEGKS) is an ATP binding site.

The protein belongs to the formate--tetrahydrofolate ligase family.

It carries out the reaction (6S)-5,6,7,8-tetrahydrofolate + formate + ATP = (6R)-10-formyltetrahydrofolate + ADP + phosphate. Its pathway is one-carbon metabolism; tetrahydrofolate interconversion. In Staphylococcus aureus (strain MRSA252), this protein is Formate--tetrahydrofolate ligase.